Here is a 188-residue protein sequence, read N- to C-terminus: UPF0340 protein BH3766 (188 aa).

Belongs to the UPF0340 family.

This is UPF0340 protein BH3766 from Halalkalibacterium halodurans (strain ATCC BAA-125 / DSM 18197 / FERM 7344 / JCM 9153 / C-125) (Bacillus halodurans).